The primary structure comprises 232 residues: Protein INAPERTURATE POLLEN 1 homolog (232 aa).

As to quaternary structure, interacts with LECRKS7/DAF1.

It localises to the cytoplasm. Its function is as follows. Required for pollen aperture formation, male fertility and LECRKS7/DAF1 function. Seems to be involved in operculum protrusion. Participates in the modification of plasma membrane at future aperture sites, possibly by creating close contact between the plasma membrane and callose wall to prevent primexine formation and sporopollenin deposition. This is Protein INAPERTURATE POLLEN 1 homolog from Oryza sativa subsp. japonica (Rice).